The following is a 377-amino-acid chain: Homoserine O-succinyltransferase (377 aa).

Residues 50 to 359 (NAVLVCHALS…SSHGHDSFLM (310 aa)) enclose the AB hydrolase-1 domain. The active-site Nucleophile is Ser156. Arg226 is a binding site for substrate. Active-site residues include Asp321 and His354. Asp355 is a substrate binding site.

The protein belongs to the AB hydrolase superfamily. MetX family. In terms of assembly, homodimer.

Its subcellular location is the cytoplasm. It catalyses the reaction L-homoserine + succinyl-CoA = O-succinyl-L-homoserine + CoA. It functions in the pathway amino-acid biosynthesis; L-methionine biosynthesis via de novo pathway; O-succinyl-L-homoserine from L-homoserine: step 1/1. In terms of biological role, transfers a succinyl group from succinyl-CoA to L-homoserine, forming succinyl-L-homoserine. The protein is Homoserine O-succinyltransferase of Nitrosospira multiformis (strain ATCC 25196 / NCIMB 11849 / C 71).